Reading from the N-terminus, the 564-residue chain is Pachytene checkpoint protein 2 (564 aa).

Gly314–Thr321 contacts ATP.

This sequence belongs to the AAA ATPase family. PCH2 subfamily.

It localises to the nucleus. It is found in the nucleolus. The protein resides in the chromosome. Its function is as follows. Required for the pachytene checkpoint, the meiotic checkpoint that prevents chromosome segregation when defects in recombination and synaptonemal complex formation occurred. Represses meiotic recombination in the rDNA, probably by excluding the meiosis-specific protein HOP1 from the nucleolar region. The sequence is that of Pachytene checkpoint protein 2 (PCH2) from Saccharomyces cerevisiae (strain ATCC 204508 / S288c) (Baker's yeast).